Reading from the N-terminus, the 217-residue chain is UPF0502 protein ASA_1460 (217 aa).

It belongs to the UPF0502 family.

This chain is UPF0502 protein ASA_1460, found in Aeromonas salmonicida (strain A449).